Consider the following 80-residue polypeptide: Acyl carrier protein (80 aa).

The Carrier domain maps to 2-77; it reads SEINQKVVDI…QVVEYLEKRL (76 aa). O-(pantetheine 4'-phosphoryl)serine is present on serine 37.

Belongs to the acyl carrier protein (ACP) family. 4'-phosphopantetheine is transferred from CoA to a specific serine of apo-ACP by AcpS. This modification is essential for activity because fatty acids are bound in thioester linkage to the sulfhydryl of the prosthetic group.

Its subcellular location is the cytoplasm. The protein operates within lipid metabolism; fatty acid biosynthesis. Its function is as follows. Carrier of the growing fatty acid chain in fatty acid biosynthesis. This is Acyl carrier protein from Amoebophilus asiaticus (strain 5a2).